The following is a 261-amino-acid chain: Hemin import ATP-binding protein HmuV (261 aa).

Residues 8–243 (IRVTDLSYSV…ESIRTAYGHE (236 aa)) enclose the ABC transporter domain. 40–47 (GRNGAGKS) contacts ATP.

This sequence belongs to the ABC transporter superfamily. Heme (hemin) importer (TC 3.A.1.14.5) family. In terms of assembly, the complex is composed of two ATP-binding proteins (HmuV), two transmembrane proteins (HmuU) and a solute-binding protein (HmuT).

It localises to the cell membrane. Part of the ABC transporter complex HmuTUV involved in hemin import. Responsible for energy coupling to the transport system. This Deinococcus radiodurans (strain ATCC 13939 / DSM 20539 / JCM 16871 / CCUG 27074 / LMG 4051 / NBRC 15346 / NCIMB 9279 / VKM B-1422 / R1) protein is Hemin import ATP-binding protein HmuV.